The following is a 334-amino-acid chain: Methionine adenosyltransferase 2 subunit beta (334 aa).

Residues 37 to 40, 60 to 62, 71 to 72, cysteine 93, arginine 97, tyrosine 159, and leucine 185 contribute to the NADP(+) site; these read TGLL, YSR, and NL. A required for interaction with MAT2A region spans residues 319 to 334; it reads LWPFLVDKRWRQTVFH.

It belongs to the dTDP-4-dehydrorhamnose reductase family. MAT2B subfamily. In terms of assembly, heterotrimer; composed of a catalytic mat2a homodimer that binds one regulatory mat2b chain. Heterohexamer; composed of a central, catalytic mat2a homotetramer flanked on either side by a regulatory mat2b chain. NADP binding increases the affinity for mat2a.

Its pathway is amino-acid biosynthesis; S-adenosyl-L-methionine biosynthesis; S-adenosyl-L-methionine from L-methionine: step 1/1. Its function is as follows. Regulatory subunit of S-adenosylmethionine synthetase 2, an enzyme that catalyzes the formation of S-adenosylmethionine from methionine and ATP. Regulates MAT2A catalytic activity by changing its kinetic properties, increasing its affinity for L-methionine. Can bind NADP (in vitro). This is Methionine adenosyltransferase 2 subunit beta (mat2b) from Xenopus tropicalis (Western clawed frog).